The following is a 340-amino-acid chain: tRNA N6-adenosine threonylcarbamoyltransferase (340 aa).

Residues His113 and His117 each contribute to the Fe cation site. Residues Leu135–Gly139, Asp169, Gly182, Asp186, and Asn274 contribute to the substrate site. Residue Asp302 participates in Fe cation binding.

This sequence belongs to the KAE1 / TsaD family. It depends on Fe(2+) as a cofactor.

Its subcellular location is the cytoplasm. It catalyses the reaction L-threonylcarbamoyladenylate + adenosine(37) in tRNA = N(6)-L-threonylcarbamoyladenosine(37) in tRNA + AMP + H(+). Its function is as follows. Required for the formation of a threonylcarbamoyl group on adenosine at position 37 (t(6)A37) in tRNAs that read codons beginning with adenine. Is involved in the transfer of the threonylcarbamoyl moiety of threonylcarbamoyl-AMP (TC-AMP) to the N6 group of A37, together with TsaE and TsaB. TsaD likely plays a direct catalytic role in this reaction. This is tRNA N6-adenosine threonylcarbamoyltransferase from Mycolicibacterium smegmatis (strain ATCC 700084 / mc(2)155) (Mycobacterium smegmatis).